A 322-amino-acid chain; its full sequence is Acetyl-coenzyme A carboxylase carboxyl transferase subunit alpha (322 aa).

A CoA carboxyltransferase C-terminal domain is found at 39 to 293; the sequence is RLAAKSQQLT…KRALAESLRQ (255 aa).

The protein belongs to the AccA family. In terms of assembly, acetyl-CoA carboxylase is a heterohexamer composed of biotin carboxyl carrier protein (AccB), biotin carboxylase (AccC) and two subunits each of ACCase subunit alpha (AccA) and ACCase subunit beta (AccD).

It is found in the cytoplasm. It catalyses the reaction N(6)-carboxybiotinyl-L-lysyl-[protein] + acetyl-CoA = N(6)-biotinyl-L-lysyl-[protein] + malonyl-CoA. It participates in lipid metabolism; malonyl-CoA biosynthesis; malonyl-CoA from acetyl-CoA: step 1/1. Its function is as follows. Component of the acetyl coenzyme A carboxylase (ACC) complex. First, biotin carboxylase catalyzes the carboxylation of biotin on its carrier protein (BCCP) and then the CO(2) group is transferred by the carboxyltransferase to acetyl-CoA to form malonyl-CoA. The protein is Acetyl-coenzyme A carboxylase carboxyl transferase subunit alpha of Ralstonia nicotianae (strain ATCC BAA-1114 / GMI1000) (Ralstonia solanacearum).